The primary structure comprises 153 residues: 3-hydroxyacyl-[acyl-carrier-protein] dehydratase FabZ (153 aa).

The active site involves histidine 57.

The protein belongs to the thioester dehydratase family. FabZ subfamily.

Its subcellular location is the cytoplasm. The enzyme catalyses a (3R)-hydroxyacyl-[ACP] = a (2E)-enoyl-[ACP] + H2O. Functionally, involved in unsaturated fatty acids biosynthesis. Catalyzes the dehydration of short chain beta-hydroxyacyl-ACPs and long chain saturated and unsaturated beta-hydroxyacyl-ACPs. The polypeptide is 3-hydroxyacyl-[acyl-carrier-protein] dehydratase FabZ (Vibrio cholerae serotype O1 (strain ATCC 39315 / El Tor Inaba N16961)).